The following is a 330-amino-acid chain: Protein RfbI (330 aa).

The 2Fe-2S ferredoxin-type domain maps to 3-89; it reads HIIKIFPSNI…ELNAHFFPEL (87 aa). Cysteine 37, cysteine 42, and cysteine 45 together coordinate [2Fe-2S] cluster. Residues 94–192 enclose the FAD-binding FR-type domain; the sequence is KKIVPCKVNS…EGPCGTFFIR (99 aa).

It depends on [2Fe-2S] cluster as a cofactor.

It functions in the pathway bacterial outer membrane biogenesis; LPS O-antigen biosynthesis. This is Protein RfbI (rfbI) from Salmonella typhimurium (strain LT2 / SGSC1412 / ATCC 700720).